Here is a 94-residue protein sequence, read N- to C-terminus: Small ribosomal subunit protein uS19 (94 aa).

The protein belongs to the universal ribosomal protein uS19 family.

Functionally, protein S19 forms a complex with S13 that binds strongly to the 16S ribosomal RNA. The protein is Small ribosomal subunit protein uS19 of Dictyoglomus turgidum (strain DSM 6724 / Z-1310).